We begin with the raw amino-acid sequence, 366 residues long: Peptide chain release factor 2 (366 aa).

Gln-251 carries the post-translational modification N5-methylglutamine.

The protein belongs to the prokaryotic/mitochondrial release factor family. Post-translationally, methylated by PrmC. Methylation increases the termination efficiency of RF2.

It localises to the cytoplasm. Peptide chain release factor 2 directs the termination of translation in response to the peptide chain termination codons UGA and UAA. The sequence is that of Peptide chain release factor 2 from Campylobacter lari (strain RM2100 / D67 / ATCC BAA-1060).